We begin with the raw amino-acid sequence, 166 residues long: Lipoprotein signal peptidase (166 aa).

The next 3 membrane-spanning stretches (helical) occupy residues 12–32, 70–90, and 102–122; these read WLWV…LILQ, WFFS…MYRS, and ALII…GFVV. Catalysis depends on residues D123 and D141. A helical transmembrane segment spans residues 137–157; that stretch reads FNLADSAICIGAALIVLEGFL.

The protein belongs to the peptidase A8 family.

The protein localises to the cell inner membrane. The catalysed reaction is Release of signal peptides from bacterial membrane prolipoproteins. Hydrolyzes -Xaa-Yaa-Zaa-|-(S,diacylglyceryl)Cys-, in which Xaa is hydrophobic (preferably Leu), and Yaa (Ala or Ser) and Zaa (Gly or Ala) have small, neutral side chains.. It functions in the pathway protein modification; lipoprotein biosynthesis (signal peptide cleavage). Functionally, this protein specifically catalyzes the removal of signal peptides from prolipoproteins. The polypeptide is Lipoprotein signal peptidase (Klebsiella pneumoniae subsp. pneumoniae (strain ATCC 700721 / MGH 78578)).